The following is a 346-amino-acid chain: Phosphoribosylformylglycinamidine cyclo-ligase (346 aa).

Belongs to the AIR synthase family.

The protein resides in the cytoplasm. The enzyme catalyses 2-formamido-N(1)-(5-O-phospho-beta-D-ribosyl)acetamidine + ATP = 5-amino-1-(5-phospho-beta-D-ribosyl)imidazole + ADP + phosphate + H(+). Its pathway is purine metabolism; IMP biosynthesis via de novo pathway; 5-amino-1-(5-phospho-D-ribosyl)imidazole from N(2)-formyl-N(1)-(5-phospho-D-ribosyl)glycinamide: step 2/2. This Shewanella pealeana (strain ATCC 700345 / ANG-SQ1) protein is Phosphoribosylformylglycinamidine cyclo-ligase.